A 27-amino-acid polypeptide reads, in one-letter code: Small integral membrane protein 43 (27 aa).

Residues 15–21 (HREPWGF) form an important for interaction with SLC2A1 and SLC2A3 region.

In terms of assembly, interacts with glucose transporters SLC2A1/GLUT1 and SLC2A3/GLUT3; the interactions may promote SLC2A1- and SLC2A3-mediated glucose transport to meet the energy needs of mesendoderm differentiation.

The protein localises to the cell membrane. In terms of biological role, required for mesendoderm differentiation. Interacts with glucose transporters and promotes glucose uptake. Probably augments the glucose uptake capacity of glucose transporter proteins to meet the energy needs of mesendoderm differentiation. In Pongo abelii (Sumatran orangutan), this protein is Small integral membrane protein 43.